The following is a 1125-amino-acid chain: Probable inorganic carbon transporter subunit DabA (1125 aa).

The Zn(2+) site is built by Cys-578, Asp-580, His-769, and Cys-784. The disordered stretch occupies residues 1106 to 1125 (SDPRPPALVEPKQTETHHAA).

It belongs to the inorganic carbon transporter (TC 9.A.2) DabA family. In terms of assembly, forms a complex with DabB. Zn(2+) is required as a cofactor.

It localises to the cell inner membrane. Functionally, part of an energy-coupled inorganic carbon pump. This is Probable inorganic carbon transporter subunit DabA from Nitrosococcus oceani (strain ATCC 19707 / BCRC 17464 / JCM 30415 / NCIMB 11848 / C-107).